A 1826-amino-acid polypeptide reads, in one-letter code: Kinesin-like protein KIF13B (1826 aa).

The 349-residue stretch at Lys5–Ile353 folds into the Kinesin motor domain. Gly103 to Ser110 provides a ligand contact to ATP. Residues Asn364–Ser439 are a coiled coil. The region spanning Thr471–Gly535 is the FHA domain. The segment at Lys546–Ser582 is disordered. Polar residues predominate over residues Ser561–Gln570. 3 coiled-coil regions span residues Met607–Arg710, Ser752–Glu772, and Leu1096–Ala1143. Position 661 is a phosphoserine (Ser661). The disordered stretch occupies residues Glu1367–Ser1420. 2 stretches are compositionally biased toward polar residues: residues Arg1378–Arg1392 and Glu1409–Ser1420. Ser1379 bears the Phosphoserine mark. Residue Ser1381 is modified to Phosphoserine; by MARK2. Ser1382 and Ser1391 each carry phosphoserine. Ser1410 carries the phosphoserine; by MARK2 modification. Phosphoserine is present on residues Ser1432, Ser1438, and Ser1537. Thr1545 bears the Phosphothreonine mark. Phosphoserine is present on Ser1559. Residues Ser1579–Ile1607 show a composition bias toward low complexity. Disordered regions lie at residues Ser1579–Arg1650 and Met1662–Pro1698. The segment covering Ser1608–Pro1624 has biased composition (pro residues). Ser1644 carries the post-translational modification Phosphoserine. A compositionally biased stretch (low complexity) spans Pro1671 to Ala1688. Residues Gly1721–Arg1763 form the CAP-Gly domain. Ser1797 carries the phosphoserine modification.

Belongs to the TRAFAC class myosin-kinesin ATPase superfamily. Kinesin family. Binds to DLG1 and DLG4. Interacts (when phosphorylated at Ser-1381 and Ser-1410) with 14-3-3. Phosphorylated at Ser-1381 and Ser-1410 by MARK2, promoting interaction with 14-3-3 and inhibiting microtubule-dependent accumulation and formation of axons. Ubiquitous.

The protein localises to the cytoplasm. The protein resides in the cytoskeleton. Its subcellular location is the cell projection. It is found in the axon. Its function is as follows. Involved in reorganization of the cortical cytoskeleton. Regulates axon formation by promoting the formation of extra axons. May be functionally important for the intracellular trafficking of MAGUKs and associated protein complexes. The sequence is that of Kinesin-like protein KIF13B (KIF13B) from Homo sapiens (Human).